Consider the following 323-residue polypeptide: Synaptonemal complex central element protein 1 (323 aa).

Polar residues predominate over residues 1–10 (MAGRPGSSNA). Disordered stretches follow at residues 1 to 31 (MAGRPGSSNAEAAGAVGPTDEARGQAESSQK) and 294 to 323 (KQEEEAGLGEAANPKPLGVSEEKDQEPSTK). 2 stretches are compositionally biased toward basic and acidic residues: residues 20-31 (DEARGQAESSQK) and 313-323 (SEEKDQEPSTK). Residues 25–290 (QAESSQKIED…EKLGVQVLAQ (266 aa)) are a coiled coil.

Belongs to the SYCE family. In terms of assembly, homodimer. Found in a complex with SYCP1 and SYCE2. Interacts with SYCP1, SYCE2 and SYCE3. Interacts with SIX6OS1.

The protein resides in the nucleus. Its subcellular location is the chromosome. Major component of the transverse central element of synaptonemal complexes (SCS), formed between homologous chromosomes during meiotic prophase. Requires SYCP1 in order to be incorporated into the central element. May have a role in the synaptonemal complex assembly, stabilization and recombination. This is Synaptonemal complex central element protein 1 (SYCE1) from Bos taurus (Bovine).